We begin with the raw amino-acid sequence, 277 residues long: Basic leucine zipper 9 (277 aa).

The interval 73–141 (ADSPVSANKP…ESAKRSRRRK (69 aa)) is disordered. Position 100 is a phosphoserine (S100). The span at 109 to 118 (AGQSEMTNDP) shows a compositional bias: polar residues. One can recognise a bZIP domain in the interval 120–183 (DLKRIRRMNS…RSAGTNNRVL (64 aa)). Residues 122-141 (KRIRRMNSNRESAKRSRRRK) are basic motif. The short motif at 124-131 (IRRMNSNR) is the Nuclear localization signal element. Positions 148–162 (LETQVDSLKGDNSTL) are leucine-zipper.

It belongs to the bZIP family. As to quaternary structure, homodimer. Interacts with BZIP1, BZIP2, BZIP10, BZIP11, BZIP25, BZIP44, BZIP53 and BZIP63. In terms of processing, phosphorylated. In terms of tissue distribution, expressed in roots, shoots, stems, young leaves, and flowers, mostly in vascular tissues (e.g. phloem).

It localises to the nucleus. Transcription factor. The protein is Basic leucine zipper 9 (BZIP9) of Arabidopsis thaliana (Mouse-ear cress).